Consider the following 333-residue polypeptide: Ketol-acid reductoisomerase (NADP(+)) (333 aa).

The KARI N-terminal Rossmann domain maps to 1–179 (MFYDDDADLS…GGTRAGVIKT (179 aa)). NADP(+) is bound by residues 22–25 (YGSQ), Lys45, Ser48, Ser50, and 80–83 (DTAQ). The active site involves His105. Gly131 provides a ligand contact to NADP(+). The KARI C-terminal knotted domain occupies 180-325 (TFKDETETDL…KKLRDLMSWV (146 aa)). Mg(2+) is bound by residues Asp188, Glu192, Glu224, and Glu228. Position 249 (Ser249) interacts with substrate.

Belongs to the ketol-acid reductoisomerase family. Mg(2+) serves as cofactor.

The enzyme catalyses (2R)-2,3-dihydroxy-3-methylbutanoate + NADP(+) = (2S)-2-acetolactate + NADPH + H(+). It catalyses the reaction (2R,3R)-2,3-dihydroxy-3-methylpentanoate + NADP(+) = (S)-2-ethyl-2-hydroxy-3-oxobutanoate + NADPH + H(+). The protein operates within amino-acid biosynthesis; L-isoleucine biosynthesis; L-isoleucine from 2-oxobutanoate: step 2/4. Its pathway is amino-acid biosynthesis; L-valine biosynthesis; L-valine from pyruvate: step 2/4. In terms of biological role, involved in the biosynthesis of branched-chain amino acids (BCAA). Catalyzes an alkyl-migration followed by a ketol-acid reduction of (S)-2-acetolactate (S2AL) to yield (R)-2,3-dihydroxy-isovalerate. In the isomerase reaction, S2AL is rearranged via a Mg-dependent methyl migration to produce 3-hydroxy-3-methyl-2-ketobutyrate (HMKB). In the reductase reaction, this 2-ketoacid undergoes a metal-dependent reduction by NADPH to yield (R)-2,3-dihydroxy-isovalerate. This chain is Ketol-acid reductoisomerase (NADP(+)), found in Mycobacterium ulcerans (strain Agy99).